A 395-amino-acid polypeptide reads, in one-letter code: ATP phosphoribosyltransferase regulatory subunit (395 aa).

The protein belongs to the class-II aminoacyl-tRNA synthetase family. HisZ subfamily. Heteromultimer composed of HisG and HisZ subunits.

It is found in the cytoplasm. It participates in amino-acid biosynthesis; L-histidine biosynthesis; L-histidine from 5-phospho-alpha-D-ribose 1-diphosphate: step 1/9. In terms of biological role, required for the first step of histidine biosynthesis. May allow the feedback regulation of ATP phosphoribosyltransferase activity by histidine. The chain is ATP phosphoribosyltransferase regulatory subunit from Ectopseudomonas mendocina (strain ymp) (Pseudomonas mendocina).